The primary structure comprises 300 residues: Geranylgeranyl pyrophosphate synthase (300 aa).

M1 carries the N-acetylmethionine modification. Isopentenyl diphosphate-binding residues include K25, R28, and H57. The Mg(2+) site is built by D64 and D68. Position 73 (R73) interacts with dimethylallyl diphosphate. An isopentenyl diphosphate-binding site is contributed by R74. Positions 151, 152, 185, 202, and 212 each coordinate dimethylallyl diphosphate.

It belongs to the FPP/GGPP synthase family. As to quaternary structure, homohexamer; trimer of homodimers. Requires Mg(2+) as cofactor.

It is found in the cytoplasm. It localises to the perinuclear region. The protein resides in the myofibril. The protein localises to the sarcomere. Its subcellular location is the z line. It carries out the reaction isopentenyl diphosphate + dimethylallyl diphosphate = (2E)-geranyl diphosphate + diphosphate. The enzyme catalyses isopentenyl diphosphate + (2E)-geranyl diphosphate = (2E,6E)-farnesyl diphosphate + diphosphate. The catalysed reaction is isopentenyl diphosphate + (2E,6E)-farnesyl diphosphate = (2E,6E,10E)-geranylgeranyl diphosphate + diphosphate. It functions in the pathway isoprenoid biosynthesis; farnesyl diphosphate biosynthesis; farnesyl diphosphate from geranyl diphosphate and isopentenyl diphosphate: step 1/1. Its pathway is isoprenoid biosynthesis; geranyl diphosphate biosynthesis; geranyl diphosphate from dimethylallyl diphosphate and isopentenyl diphosphate: step 1/1. The protein operates within isoprenoid biosynthesis; geranylgeranyl diphosphate biosynthesis; geranylgeranyl diphosphate from farnesyl diphosphate and isopentenyl diphosphate: step 1/1. Functionally, catalyzes the trans-addition of the three molecules of IPP onto DMAPP to form geranylgeranyl pyrophosphate, an important precursor of carotenoids and geranylated proteins. In Rattus norvegicus (Rat), this protein is Geranylgeranyl pyrophosphate synthase (Ggps1).